The following is a 188-amino-acid chain: uncharacterized protein (188 aa).

Residues Thr136–Trp156 traverse the membrane as a helical segment.

It is found in the host membrane. This is an uncharacterized protein from Magallana gigas (Pacific oyster).